The chain runs to 500 residues: Cytochrome P450 2D16 (500 aa).

Position 249 is a phosphoserine (serine 249). Position 446 (cysteine 446) interacts with heme.

Belongs to the cytochrome P450 family. Heme is required as a cofactor. Expressed at high levels in the inner zone of the adrenal cortex.

The protein resides in the endoplasmic reticulum membrane. It localises to the microsome membrane. The enzyme catalyses an organic molecule + reduced [NADPH--hemoprotein reductase] + O2 = an alcohol + oxidized [NADPH--hemoprotein reductase] + H2O + H(+). Functionally, cytochromes P450 are a group of heme-thiolate monooxygenases. In liver microsomes, this enzyme is involved in an NADPH-dependent electron transport pathway. It oxidizes a variety of structurally unrelated compounds, including steroids, fatty acids, and xenobiotics. In Cavia porcellus (Guinea pig), this protein is Cytochrome P450 2D16 (CYP2D16).